The following is a 349-amino-acid chain: MDTIAARALTVMRVCATLQEARIVLEPNVMEILGIAINRYNGLTLRGVTMRPTSLAQRNEMFFMCLDMMVSAAGINVGPISPDYTQHMATIGVLATPEIPFTTEAANEIARVTGETSTWGPARQPYGFFLETEEVYQPGRWFMRAAQVVTPVVCGPNMVQVSLNAGAIGDVQQIFQGRNDPMMIYLVWRRIENFSMPQGNSQRTLAGVTVSVGGVDMRAGRIIAWDGQAVLQIHNPTQQNAMVQIQVVFYVSMDKTLNQYPALTAEIFNVYSFRDHTWHGLRTAILNRTTLPNMLPPIFPPNDRDSVLTILLLSTLADVYSVLRPEFAIHGVNPMPGPLTRAIARAAYA.

Residues Asn-193 and Asn-287 are each glycosylated (N-linked (GlcNAc...) asparagine; by host).

This sequence belongs to the orbivirus VP7 family. As to quaternary structure, homotrimer that assemble in a complex of 260 capsomers on an inner scaffold composed of VP3.

It localises to the virion. Functionally, the VP7 protein is one of the five proteins (with VP1, VP3, VP4, and VP6) which form the inner capsid of the virus. In Antilocapra americana (Pronghorn), this protein is Core protein VP7 (Segment-7).